The sequence spans 245 residues: Uridylate kinase (245 aa).

Residue 12 to 15 participates in ATP binding; sequence KLSG. The involved in allosteric activation by GTP stretch occupies residues 20–25; that stretch reads GEKGVG. G54 lines the UMP pocket. ATP-binding residues include G55 and R59. Residues D74 and 135–142 contribute to the UMP site; that span reads IGSPYFST. The ATP site is built by N163, Y169, and D172.

The protein belongs to the UMP kinase family. As to quaternary structure, homohexamer.

The protein resides in the cytoplasm. It carries out the reaction UMP + ATP = UDP + ADP. It participates in pyrimidine metabolism; CTP biosynthesis via de novo pathway; UDP from UMP (UMPK route): step 1/1. Allosterically activated by GTP. Inhibited by UTP. Catalyzes the reversible phosphorylation of UMP to UDP. This is Uridylate kinase from Streptococcus thermophilus (strain ATCC BAA-250 / LMG 18311).